The chain runs to 147 residues: UPF0735 ACT domain-containing protein GTNG_2535 (147 aa).

Positions 69–144 (TLFFHLEDRS…FVEKVEIVGS (76 aa)) constitute an ACT domain.

Belongs to the UPF0735 family.

This Geobacillus thermodenitrificans (strain NG80-2) protein is UPF0735 ACT domain-containing protein GTNG_2535.